The chain runs to 290 residues: Ribosomal RNA small subunit methyltransferase A (290 aa).

Asn-27, Leu-29, Gly-54, Glu-75, Asp-100, and Asn-125 together coordinate S-adenosyl-L-methionine.

Belongs to the class I-like SAM-binding methyltransferase superfamily. rRNA adenine N(6)-methyltransferase family. RsmA subfamily.

The protein localises to the cytoplasm. It catalyses the reaction adenosine(1518)/adenosine(1519) in 16S rRNA + 4 S-adenosyl-L-methionine = N(6)-dimethyladenosine(1518)/N(6)-dimethyladenosine(1519) in 16S rRNA + 4 S-adenosyl-L-homocysteine + 4 H(+). Its function is as follows. Specifically dimethylates two adjacent adenosines (A1518 and A1519) in the loop of a conserved hairpin near the 3'-end of 16S rRNA in the 30S particle. May play a critical role in biogenesis of 30S subunits. This Streptococcus pyogenes serotype M18 (strain MGAS8232) protein is Ribosomal RNA small subunit methyltransferase A.